The primary structure comprises 1045 residues: Pre-mRNA-splicing factor ATP-dependent RNA helicase DHX16 (1045 aa).

The disordered stretch occupies residues 101 to 211; it reads EDSEESSEEA…ERSDKKAYEE (111 aa). A phosphoserine mark is found at S103, S106, and S107. Residues 119 to 131 are compositionally biased toward basic residues; it reads QKKRKKRKHLRKK. The span at 135 to 144 shows a compositional bias: acidic residues; the sequence is EEEEEEEEEV. Position 164 is a phosphoserine (S164). Positions 170–211 are enriched in basic and acidic residues; sequence RTERERLQDLEERDAFAERVRQRDKDRTRNVLERSDKKAYEE. One can recognise a Helicase ATP-binding domain in the interval 413–577; it reads LAAVANHQIL…FDDAPVFRIP (165 aa). 426-433 lines the ATP pocket; sequence GETGSGKT. Residues 524-527 carry the DEAH box motif; it reads DEAH. The region spanning 602–775 is the Helicase C-terminal domain; the sequence is SVLQIHVTQP…NVVLLLKSLG (174 aa). The residue at position 716 (T716) is a Phosphothreonine. Residues 1026–1045 form a disordered region; it reads EDPHAKKMPKKTGKTREELG.

Belongs to the DEAD box helicase family. DEAH subfamily. DDX16/PRP8 sub-subfamily. In terms of assembly, component of pre-catalytic spliceosome complexes. Component of the minor spliceosome, which splices U12-type introns. Interacts with GPKOW. Interacts with TRIM6. Interacts with RIGI.

The protein localises to the nucleus. It localises to the nucleoplasm. It is found in the cytoplasm. The catalysed reaction is ATP + H2O = ADP + phosphate + H(+). Its function is as follows. Required for pre-mRNA splicing as a component of the spliceosome. Contributes to pre-mRNA splicing after spliceosome formation and prior to the first transesterification reaction. As a component of the minor spliceosome, involved in the splicing of U12-type introns in pre-mRNAs. Also plays a role in innate antiviral response by acting as a pattern recognition receptor sensing splicing signals in viral RNA. Mechanistically, TRIM6 promotes the interaction between unanchored 'Lys-48'-polyubiquitin chains and DHX16, leading to DHX16 interaction with RIGI and ssRNA to amplify RIGI-dependent innate antiviral immune responses. The chain is Pre-mRNA-splicing factor ATP-dependent RNA helicase DHX16 (DHX16) from Sus scrofa (Pig).